The primary structure comprises 94 residues: Large ribosomal subunit protein bL27 (94 aa).

Positions 1 to 9 (MLELNLQLF) are excised as a propeptide. Residues 12–33 (KKGGGSTSNGRDSQAKRLGAKA) form a disordered region.

It belongs to the bacterial ribosomal protein bL27 family. Post-translationally, the N-terminus is cleaved by ribosomal processing cysteine protease Prp.

This Lactococcus lactis subsp. cremoris (strain MG1363) protein is Large ribosomal subunit protein bL27.